The sequence spans 186 residues: Adenine phosphoribosyltransferase (186 aa).

Residue 132–136 (ATGGS) participates in AMP binding.

Belongs to the purine/pyrimidine phosphoribosyltransferase family. As to quaternary structure, homodimer. The cofactor is Mg(2+).

It is found in the cytoplasm. Its subcellular location is the nucleus. It carries out the reaction AMP + diphosphate = 5-phospho-alpha-D-ribose 1-diphosphate + adenine. Its pathway is purine metabolism; AMP biosynthesis via salvage pathway; AMP from adenine: step 1/1. Its function is as follows. Catalyzes a salvage reaction resulting in the formation of AMP, that is energically less costly than de novo synthesis. The protein is Adenine phosphoribosyltransferase (APT1) of Debaryomyces hansenii (strain ATCC 36239 / CBS 767 / BCRC 21394 / JCM 1990 / NBRC 0083 / IGC 2968) (Yeast).